Here is a 78-residue protein sequence, read N- to C-terminus: Sec-independent protein translocase protein TatA (78 aa).

Residues 1–21 (MFGRIGLPEILLILAIALIIF) form a helical membrane-spanning segment. Residues 50–78 (EVNEVEEEVKENKSSDVKENEDNKTEKST) form a disordered region. A compositionally biased stretch (basic and acidic residues) spans 59–78 (KENKSSDVKENEDNKTEKST).

It belongs to the TatA/E family. In terms of assembly, forms a complex with TatC.

The protein localises to the cell membrane. In terms of biological role, part of the twin-arginine translocation (Tat) system that transports large folded proteins containing a characteristic twin-arginine motif in their signal peptide across membranes. TatA could form the protein-conducting channel of the Tat system. This chain is Sec-independent protein translocase protein TatA, found in Natranaerobius thermophilus (strain ATCC BAA-1301 / DSM 18059 / JW/NM-WN-LF).